Consider the following 207-residue polypeptide: tRNA (pseudouridine(54)-N(1))-methyltransferase (207 aa).

Leu137 contacts S-adenosyl-L-methionine.

It belongs to the methyltransferase superfamily. TrmY family. In terms of assembly, homodimer.

The protein resides in the cytoplasm. It catalyses the reaction pseudouridine(54) in tRNA + S-adenosyl-L-methionine = N(1)-methylpseudouridine(54) in tRNA + S-adenosyl-L-homocysteine + H(+). Specifically catalyzes the N1-methylation of pseudouridine at position 54 (Psi54) in tRNAs. The polypeptide is tRNA (pseudouridine(54)-N(1))-methyltransferase (Halorubrum lacusprofundi (strain ATCC 49239 / DSM 5036 / JCM 8891 / ACAM 34)).